The sequence spans 314 residues: MTRLPILLLLISLVYATPFPQTSKKIGDDATLSCNRNNTNDYVVMSAWYKEPNSIILLAAKSDVLYFDNYTKDKISYDSPYDDLVTTITIKSLTARDAGTYVCAFFMTSTTNDTDKVDYEEYSTELIVNTDSESTIDIILSGSTHSPETSSKKPDYIDNSNCSSVFEIATPEPITDNVEDHTDTVTYTSDSINTVSASSGESTTDETPEPITDKEDHTVTDTVSYTTVSTSSGIVTTKSTTDDADLYDTYNDNDTVPPTTVGGSTTSISNYKTKDFVEIFGITALIILSAVAIFCITYYIYNKRSRKYKTENKV.

Residues 1–16 (MTRLPILLLLISLVYA) form the signal peptide. One can recognise an Ig-like V-type domain in the interval 17–121 (TPFPQTSKKI…NDTDKVDYEE (105 aa)). Topologically, residues 17 to 278 (TPFPQTSKKI…SNYKTKDFVE (262 aa)) are virion surface. A disulfide bond links C34 and C103. N-linked (GlcNAc...) asparagine; by host glycans are attached at residues N37, N69, N112, and N161. Polar residues predominate over residues 193–202 (NTVSASSGES). The segment at 193 to 214 (NTVSASSGESTTDETPEPITDK) is disordered. N253 carries an N-linked (GlcNAc...) asparagine; by host glycan. A helical transmembrane segment spans residues 279 to 302 (IFGITALIILSAVAIFCITYYIYN). The Intravirion segment spans residues 303–314 (KRSRKYKTENKV).

It belongs to the orthopoxvirus OPG185 family. In terms of assembly, heterodimerizes with OPG040. The heterodimer OPG185-OPG040 interacts with components of the entry fusion complex OPG143 and OPG094. Heterodimer with C3/VPC protein; disulfide-linked. Glycosylated; contains phosphate and sulfate-substituted glycans. O-glycosylation is required for hemagglutination and hemadsorption activities of infected cell membranes.

The protein localises to the virion membrane. Its subcellular location is the host membrane. In terms of biological role, prevents cell to cell fusion by interacting with and directing the viral OPG040 protein on the host plasma membrane. The OPG185-OPG040 complex associates with components of the entry fusion complex (EFC) presumably to avoid superinfection and syncytium formation. Via its interaction with C3/VCP protein, protects the infected cell and probably also the extracellular enveloped virus from complement attack. This Bos taurus (Bovine) protein is Protein OPG185 (OPG185).